The following is a 559-amino-acid chain: MDTAELSKVDDGWTVLTFAAAYGLEKVCEALIPKMSEQAINHVDKDGNTALTWAAYTGLEKVCEALIPKMSDQAINHVNSDGNTALSIARNKGFKNMCDLLTTIEATKQNEIQTNLKLTTTKTSHEKLIEAIEARNEAEAQNLIVHMDTAELSKVNNDDWTALTFAAAYGLEKVCELLIPKMTDQVINHVDKDGDTALTWAASSGLEKICEALIPKMTEQTINQLTDNNDTVLTLAANKSLGKICEILIPKMTDQAINQVNKDGNTALIAAASSHLEKICEALIPKMSDQAINHINNYGNTALIAAASSGLEKVCETLIPKMTEQAINQANHQCDTALIFAVRNSLKKVCEVLIPKMSYEAINCWSTNSFWFGFTAFTWVTLNGDKKICELLIPKTSPEVIIDILKLTKEKQFIIEAINSCNKTSPEVIINILKLAKEKQFMIEAINNYNNKLVKELNLILDENNPNNAIKMIRAVKIYKKLFKEYLTVEKTENFKPLQNTIEDFIKNNFFTAAGVCKNLIPKIDNNEIHISCLTTEIIAHIVEYLENEKWGLEVETLG.

10 ANK repeats span residues Asp11 to Ile40, Asp46 to Ile75, Asp81 to Asn110, Asp158 to His189, Asn228 to Ile257, Asp263 to Ile292, Tyr298 to Ile327, Gln333 to Cys364, Phe372 to Ile402, and Ile524 to Glu554.

This Rickettsia bellii (strain RML369-C) protein is Putative ankyrin repeat protein RBE_0902.